A 202-amino-acid polypeptide reads, in one-letter code: uncharacterized protein (202 aa).

Belongs to the NAD(P)H dehydrogenase (quinone) family.

This is an uncharacterized protein from Haemophilus influenzae (strain ATCC 51907 / DSM 11121 / KW20 / Rd).